The following is a 195-amino-acid chain: Holliday junction branch migration complex subunit RuvA (195 aa).

Residues 1–61 (MYEYLDGVVV…ENDQTLYGFK (61 aa)) are domain I. The interval 62 to 139 (KAEDKELFLN…AVENEVGTLF (78 aa)) is domain II. Residues 139-143 (FDLST) are flexible linker. Positions 144 to 195 (TSNQALDEALEALIALGYSEKEVKKLTKKLSEQTDRTTDQYISSGLKLLMKG) are domain III.

Belongs to the RuvA family. In terms of assembly, homotetramer. Forms an RuvA(8)-RuvB(12)-Holliday junction (HJ) complex. HJ DNA is sandwiched between 2 RuvA tetramers; dsDNA enters through RuvA and exits via RuvB. An RuvB hexamer assembles on each DNA strand where it exits the tetramer. Each RuvB hexamer is contacted by two RuvA subunits (via domain III) on 2 adjacent RuvB subunits; this complex drives branch migration. In the full resolvosome a probable DNA-RuvA(4)-RuvB(12)-RuvC(2) complex forms which resolves the HJ.

It is found in the cytoplasm. Functionally, the RuvA-RuvB-RuvC complex processes Holliday junction (HJ) DNA during genetic recombination and DNA repair, while the RuvA-RuvB complex plays an important role in the rescue of blocked DNA replication forks via replication fork reversal (RFR). RuvA specifically binds to HJ cruciform DNA, conferring on it an open structure. The RuvB hexamer acts as an ATP-dependent pump, pulling dsDNA into and through the RuvAB complex. HJ branch migration allows RuvC to scan DNA until it finds its consensus sequence, where it cleaves and resolves the cruciform DNA. The protein is Holliday junction branch migration complex subunit RuvA of Pediococcus pentosaceus (strain ATCC 25745 / CCUG 21536 / LMG 10740 / 183-1w).